A 66-amino-acid chain; its full sequence is Large ribosomal subunit protein bL33c (66 aa).

The protein belongs to the bacterial ribosomal protein bL33 family.

It is found in the plastid. Its subcellular location is the chloroplast. The chain is Large ribosomal subunit protein bL33c from Glycine max (Soybean).